A 549-amino-acid chain; its full sequence is Cilia- and flagella-associated protein 45 (549 aa).

Residues 1–27 (MPLSTAGVLSSASTASNRSRNRPRYRT) are disordered. 2 coiled-coil regions span residues 119 to 232 (KEEL…MMEV) and 259 to 393 (IVEQ…KRNQ). Residues 391 to 416 (RNQEVADREWRRKEKENAQKKMETEA) are disordered.

Belongs to the CFAP45 family. As to quaternary structure, microtubule inner protein component of sperm flagellar doublet microtubules. Interacts with AK8; dimerization with AK8 may create a cavity at the interface of the dimer that can accommodate AMP. Interacts with CFAP52. Interacts with ENKUR. Directly interacts with DNALI1. Interacts with DNAH11. Interacts with DNAI1. In terms of tissue distribution, expressed in trachea multiciliated cells.

Its subcellular location is the cytoplasm. The protein resides in the cytoskeleton. The protein localises to the cilium axoneme. It localises to the flagellum axoneme. It is found in the cell projection. Its subcellular location is the cilium. The protein resides in the flagellum. Its function is as follows. Microtubule inner protein (MIP) part of the dynein-decorated doublet microtubules (DMTs) in cilia axoneme, which is required for motile cilia beating. It is an AMP-binding protein that may facilitate dynein ATPase-dependent ciliary and flagellar beating via adenine nucleotide homeostasis. May function as a donor of AMP to AK8 and hence promote ADP production. In Bos taurus (Bovine), this protein is Cilia- and flagella-associated protein 45.